A 313-amino-acid polypeptide reads, in one-letter code: 4-diphosphocytidyl-2-C-methyl-D-erythritol kinase (313 aa).

The active site involves Lys11. 99-109 serves as a coordination point for ATP; the sequence is PVAAGLAGGST. Residue Asp141 is part of the active site.

It belongs to the GHMP kinase family. IspE subfamily.

It catalyses the reaction 4-CDP-2-C-methyl-D-erythritol + ATP = 4-CDP-2-C-methyl-D-erythritol 2-phosphate + ADP + H(+). Its pathway is isoprenoid biosynthesis; isopentenyl diphosphate biosynthesis via DXP pathway; isopentenyl diphosphate from 1-deoxy-D-xylulose 5-phosphate: step 3/6. Its function is as follows. Catalyzes the phosphorylation of the position 2 hydroxy group of 4-diphosphocytidyl-2C-methyl-D-erythritol. This Microcystis aeruginosa (strain NIES-843 / IAM M-2473) protein is 4-diphosphocytidyl-2-C-methyl-D-erythritol kinase.